The primary structure comprises 303 residues: Coenzyme PQQ synthesis protein B (303 aa).

This sequence belongs to the PqqB family.

It functions in the pathway cofactor biosynthesis; pyrroloquinoline quinone biosynthesis. Functionally, may be involved in the transport of PQQ or its precursor to the periplasm. This Pseudomonas syringae pv. tomato (strain ATCC BAA-871 / DC3000) protein is Coenzyme PQQ synthesis protein B.